The chain runs to 272 residues: Orotidine 5'-phosphate decarboxylase (272 aa).

Lys-93 (proton donor) is an active-site residue.

It belongs to the OMP decarboxylase family. Type 2 subfamily.

The catalysed reaction is orotidine 5'-phosphate + H(+) = UMP + CO2. Its pathway is pyrimidine metabolism; UMP biosynthesis via de novo pathway; UMP from orotate: step 2/2. The sequence is that of Orotidine 5'-phosphate decarboxylase from Roseiflexus castenholzii (strain DSM 13941 / HLO8).